We begin with the raw amino-acid sequence, 210 residues long: Uridine kinase (210 aa).

14 to 21 serves as a coordination point for ATP; it reads GGSGSGKT.

Belongs to the uridine kinase family.

The protein localises to the cytoplasm. The catalysed reaction is uridine + ATP = UMP + ADP + H(+). The enzyme catalyses cytidine + ATP = CMP + ADP + H(+). It functions in the pathway pyrimidine metabolism; CTP biosynthesis via salvage pathway; CTP from cytidine: step 1/3. It participates in pyrimidine metabolism; UMP biosynthesis via salvage pathway; UMP from uridine: step 1/1. The sequence is that of Uridine kinase from Deinococcus radiodurans (strain ATCC 13939 / DSM 20539 / JCM 16871 / CCUG 27074 / LMG 4051 / NBRC 15346 / NCIMB 9279 / VKM B-1422 / R1).